The sequence spans 206 residues: Synaptosomal-associated protein 25 (206 aa).

The span at 1–20 shows a compositional bias: basic and acidic residues; the sequence is MAEDADMRNELEEMQRRADQ. The segment at 1 to 23 is disordered; the sequence is MAEDADMRNELEEMQRRADQLAD. A t-SNARE coiled-coil homology 1 domain is found at 19-81; it reads DQLADESLES…KEAEKNLTDL (63 aa). Residues Cys-85, Cys-88, Cys-90, and Cys-92 are each lipidated (S-palmitoyl cysteine). Thr-138 bears the Phosphothreonine mark. Residues 140–202 enclose the t-SNARE coiled-coil homology 2 domain; that stretch reads DARENEMDEN…DEANQRATKM (63 aa). At Ser-187 the chain carries Phosphoserine.

Belongs to the SNAP-25 family. As to quaternary structure, part of the SNARE core complex containing SNAP25, VAMP2 and STX1A. This complex binds CPLX1. Interacts with TRIM9, RIMS1 and SNAPIN. Binds STXBP6. Found in a ternary complex with STX1A and VAMP8. Associates with the BLOC-1 complex. Isoform 1 and isoform 2 interact with BLOC1S6. Interacts with alpha-synuclein/SNCA. In terms of processing, palmitoylated. Cys-85 appears to be the main site, and palmitoylation is required for membrane association.

It localises to the membrane. Its subcellular location is the synapse. The protein localises to the synaptosome. It is found in the cell membrane. Its function is as follows. t-SNARE involved in the molecular regulation of neurotransmitter release. May play an important role in the synaptic function of specific neuronal systems. Associates with proteins involved in vesicle docking and membrane fusion. The sequence is that of Synaptosomal-associated protein 25 (SNAP25) from Gallus gallus (Chicken).